Reading from the N-terminus, the 147-residue chain is Protein phosphatase 1 regulatory subunit 14A (147 aa).

Over residues 1-11 (MAAQRLGKRVL) the composition is skewed to basic residues. The segment at 1 to 37 (MAAQRLGKRVLSKLQSPSRARGPGGSPGGLQKRHARV) is disordered. Ser-26 is modified (phosphoserine). Residues 35-120 (ARVTVKYDRR…LLVKLRGLHK (86 aa)) form an inhibitory region. At Thr-38 the chain carries Phosphothreonine. Positions 118–147 (LHKQPGLRQPSPSGDGSLSPRQDRARTAPP) are disordered. The span at 127–137 (PSPSGDGSLSP) shows a compositional bias: polar residues. Phosphoserine is present on residues Ser-128, Ser-134, and Ser-136. Over residues 138–147 (RQDRARTAPP) the composition is skewed to basic and acidic residues.

Belongs to the PP1 inhibitor family. Post-translationally, phosphorylation of Thr-38 induces a conformation change. In terms of tissue distribution, detected in aorta smooth muscle and bladder.

It is found in the cytoplasm. Functionally, inhibitor of PPP1CA. Has over 1000-fold higher inhibitory activity when phosphorylated, creating a molecular switch for regulating the phosphorylation status of PPP1CA substrates and smooth muscle contraction. The protein is Protein phosphatase 1 regulatory subunit 14A (CPI17) of Sus scrofa (Pig).